We begin with the raw amino-acid sequence, 115 residues long: UPF0102 protein SYO3AOP1_0546 (115 aa).

This sequence belongs to the UPF0102 family.

The polypeptide is UPF0102 protein SYO3AOP1_0546 (Sulfurihydrogenibium sp. (strain YO3AOP1)).